The chain runs to 467 residues: uncharacterized protein (467 aa).

The segment at 1–60 (MVRVSRGCQSCVDAKLQSTPSPSPSKSPSPTESPEQCLQKRQSGEQVVLPSRPFPRTSPR) is disordered.

Functionally, involved in osmoadaptation. This is an uncharacterized protein from Emericella nidulans (strain FGSC A4 / ATCC 38163 / CBS 112.46 / NRRL 194 / M139) (Aspergillus nidulans).